Reading from the N-terminus, the 602-residue chain is Probable translation initiation factor IF-2 (602 aa).

The tr-type G domain occupies Leu-10–Met-227. The segment at Gly-19–Thr-26 is G1. Gly-19–Thr-26 is a GTP binding site. Residues Glu-44 to Glu-48 form a G2 region. The interval Asp-83–Gly-86 is G3. Residues Asp-83–His-87 and Asn-137–Asp-140 each bind GTP. The segment at Asn-137–Asp-140 is G4. The segment at Ser-205 to Lys-207 is G5.

Belongs to the TRAFAC class translation factor GTPase superfamily. Classic translation factor GTPase family. IF-2 subfamily.

Function in general translation initiation by promoting the binding of the formylmethionine-tRNA to ribosomes. Seems to function along with eIF-2. The sequence is that of Probable translation initiation factor IF-2 from Sulfurisphaera tokodaii (strain DSM 16993 / JCM 10545 / NBRC 100140 / 7) (Sulfolobus tokodaii).